A 215-amino-acid polypeptide reads, in one-letter code: Somatotropin (215 aa).

A signal peptide spans 1-25 (MAPGARISLLLLITFTLLGPQRSGA). Residue H44 participates in Zn(2+) binding. Residues C77 and C188 are joined by a disulfide bond. Position 130 is a phosphoserine (S130). E197 serves as a coordination point for Zn(2+). A disulfide bridge links C205 with C213.

It belongs to the somatotropin/prolactin family.

It is found in the secreted. Plays an important role in growth control. Its major role in stimulating body growth is to stimulate the liver and other tissues to secrete IGF1. It stimulates both the differentiation and proliferation of myoblasts. It also stimulates amino acid uptake and protein synthesis in muscle and other tissues. This Trichosurus vulpecula (Brush-tailed possum) protein is Somatotropin (GH1).